Consider the following 391-residue polypeptide: Succinyl-diaminopimelate desuccinylase (391 aa).

Residue H67 coordinates Zn(2+). D69 is a catalytic residue. Zn(2+) is bound at residue D101. E135 acts as the Proton acceptor in catalysis. Positions 136, 164, and 353 each coordinate Zn(2+).

It belongs to the peptidase M20A family. DapE subfamily. As to quaternary structure, homodimer. The cofactor is Zn(2+). It depends on Co(2+) as a cofactor.

The enzyme catalyses N-succinyl-(2S,6S)-2,6-diaminopimelate + H2O = (2S,6S)-2,6-diaminopimelate + succinate. The protein operates within amino-acid biosynthesis; L-lysine biosynthesis via DAP pathway; LL-2,6-diaminopimelate from (S)-tetrahydrodipicolinate (succinylase route): step 3/3. Functionally, catalyzes the hydrolysis of N-succinyl-L,L-diaminopimelic acid (SDAP), forming succinate and LL-2,6-diaminopimelate (DAP), an intermediate involved in the bacterial biosynthesis of lysine and meso-diaminopimelic acid, an essential component of bacterial cell walls. The sequence is that of Succinyl-diaminopimelate desuccinylase from Rickettsia bellii (strain RML369-C).